Reading from the N-terminus, the 972-residue chain is Isoleucine--tRNA ligase (972 aa).

The 'HIGH' region signature appears at proline 63–histidine 73. An L-isoleucyl-5'-AMP-binding site is contributed by glutamate 603. The 'KMSKS' region signature appears at lysine 644 to serine 648. Lysine 647 contacts ATP.

This sequence belongs to the class-I aminoacyl-tRNA synthetase family. IleS type 1 subfamily. Monomer.

Its subcellular location is the cytoplasm. It catalyses the reaction tRNA(Ile) + L-isoleucine + ATP = L-isoleucyl-tRNA(Ile) + AMP + diphosphate. In terms of biological role, catalyzes the attachment of isoleucine to tRNA(Ile). As IleRS can inadvertently accommodate and process structurally similar amino acids such as valine, to avoid such errors it has two additional distinct tRNA(Ile)-dependent editing activities. One activity is designated as 'pretransfer' editing and involves the hydrolysis of activated Val-AMP. The other activity is designated 'posttransfer' editing and involves deacylation of mischarged Val-tRNA(Ile). This Brucella suis biovar 1 (strain 1330) protein is Isoleucine--tRNA ligase.